The chain runs to 540 residues: MQYIVVTGGVISGLGKGTITSSIGHILKDSGFKVSSVKIDPYINYDAGTMNPYQHGEVFVLDDGSEVDLDLGNYERFMDINLSWKNNITTGKVYLEVIEKERHGDYLGKTVQIIPHITDEIKRRIRDVATSSKADFVLIEVGGTVGDIESMPFLEAVRQLKREENNVIFAHVTLVPEIGPTEEQKTKPTQHSVKALREIGIQPDIIFARSKNRLLEETKKRISLFTDVPEGGIISVYDVENVYLLPEVMVNEGFISYLSKLSGKEIKYRDSWKAYTENIKHPKDRVKIAIVGKYVDLHDAYISHKEAFSHVTGNTGIAVDIKWLDSEKVKDDQSMLSDVDAILIPGGFGYRGVEGKIAATRFALENHIPFLGICLGFQVAVIEIARDIIGLQNANSTEFDPATKYPVIDILPEQKGIKDLGGTMRLGSKKVLIKDGTLAKRIYGTDTIYERHRHRYEVNPNYISIIEKAGFVFSGTDEDGIRMEILEKKGDESFIATQYHSEFKSRPLNPSRVHLHLVQQALIYKKNKDIGEAVKLRSSV.

The segment at 1–264 (MQYIVVTGGV…ISYLSKLSGK (264 aa)) is amidoligase domain. Ser12 serves as a coordination point for CTP. Ser12 is a UTP binding site. An ATP-binding site is contributed by 13-18 (GLGKGT). Tyr53 contributes to the L-glutamine binding site. An ATP-binding site is contributed by Asp70. Asp70 and Glu140 together coordinate Mg(2+). Residues 147–149 (DIE), 185–190 (KTKPTQ), and Arg221 each bind CTP. Residues 185–190 (KTKPTQ) and Arg221 contribute to the UTP site. Residues 294-527 (YVDLHDAYIS…VQQALIYKKN (234 aa)) form the Glutamine amidotransferase type-1 domain. Gly347 provides a ligand contact to L-glutamine. Cys374 acts as the Nucleophile; for glutamine hydrolysis in catalysis. L-glutamine contacts are provided by residues 375-378 (LGFQ), Glu398, and Arg455. Catalysis depends on residues His500 and Glu502.

Belongs to the CTP synthase family. As to quaternary structure, homotetramer.

The enzyme catalyses UTP + L-glutamine + ATP + H2O = CTP + L-glutamate + ADP + phosphate + 2 H(+). It carries out the reaction L-glutamine + H2O = L-glutamate + NH4(+). It catalyses the reaction UTP + NH4(+) + ATP = CTP + ADP + phosphate + 2 H(+). It participates in pyrimidine metabolism; CTP biosynthesis via de novo pathway; CTP from UDP: step 2/2. Its activity is regulated as follows. Allosterically activated by GTP, when glutamine is the substrate; GTP has no effect on the reaction when ammonia is the substrate. The allosteric effector GTP functions by stabilizing the protein conformation that binds the tetrahedral intermediate(s) formed during glutamine hydrolysis. Inhibited by the product CTP, via allosteric rather than competitive inhibition. In terms of biological role, catalyzes the ATP-dependent amination of UTP to CTP with either L-glutamine or ammonia as the source of nitrogen. Regulates intracellular CTP levels through interactions with the four ribonucleotide triphosphates. In Thermoplasma volcanium (strain ATCC 51530 / DSM 4299 / JCM 9571 / NBRC 15438 / GSS1), this protein is CTP synthase.